The chain runs to 135 residues: Probable histone H2A.2 (135 aa).

This sequence belongs to the histone H2A family. The nucleosome is a histone octamer containing two molecules each of H2A, H2B, H3 and H4 assembled in one H3-H4 heterotetramer and two H2A-H2B heterodimers. The octamer wraps approximately 147 bp of DNA.

The protein localises to the nucleus. It localises to the chromosome. Its function is as follows. Core component of nucleosome. Nucleosomes wrap and compact DNA into chromatin, limiting DNA accessibility to the cellular machineries which require DNA as a template. Histones thereby play a central role in transcription regulation, DNA repair, DNA replication and chromosomal stability. DNA accessibility is regulated via a complex set of post-translational modifications of histones, also called histone code, and nucleosome remodeling. The polypeptide is Probable histone H2A.2 (Oryza sativa subsp. indica (Rice)).